Consider the following 212-residue polypeptide: Ependymin (212 aa).

The N-terminal stretch at 1 to 20 (MRLTGLLCVALWSASAVVLA) is a signal peptide. Residues asparagine 69, asparagine 92, and asparagine 112 are each glycosylated (N-linked (GlcNAc...) asparagine).

It belongs to the ependymin family. Forms disulfide-linked dimers. Binds calcium through the terminal sialic acids. EPDs are synthesized in the meninx and secreted in the cerebrospinal fluid.

The protein localises to the secreted. Functionally, may play a role in neural plasticity. May be involved during axon regeneration. The protein is Ependymin (epd) of Clupea harengus (Atlantic herring).